Consider the following 95-residue polypeptide: Aspartyl/glutamyl-tRNA(Asn/Gln) amidotransferase subunit C (95 aa).

This sequence belongs to the GatC family. Heterotrimer of A, B and C subunits.

It carries out the reaction L-glutamyl-tRNA(Gln) + L-glutamine + ATP + H2O = L-glutaminyl-tRNA(Gln) + L-glutamate + ADP + phosphate + H(+). It catalyses the reaction L-aspartyl-tRNA(Asn) + L-glutamine + ATP + H2O = L-asparaginyl-tRNA(Asn) + L-glutamate + ADP + phosphate + 2 H(+). Functionally, allows the formation of correctly charged Asn-tRNA(Asn) or Gln-tRNA(Gln) through the transamidation of misacylated Asp-tRNA(Asn) or Glu-tRNA(Gln) in organisms which lack either or both of asparaginyl-tRNA or glutaminyl-tRNA synthetases. The reaction takes place in the presence of glutamine and ATP through an activated phospho-Asp-tRNA(Asn) or phospho-Glu-tRNA(Gln). The protein is Aspartyl/glutamyl-tRNA(Asn/Gln) amidotransferase subunit C of Nitrosococcus oceani (strain ATCC 19707 / BCRC 17464 / JCM 30415 / NCIMB 11848 / C-107).